The chain runs to 210 residues: Dephospho-CoA kinase (210 aa).

One can recognise a DPCK domain in the interval 4–202 (WVGLTGGIGS…AFYSGIFASK (199 aa)). 12 to 17 (GSGKSA) provides a ligand contact to ATP.

It belongs to the CoaE family.

Its subcellular location is the cytoplasm. It catalyses the reaction 3'-dephospho-CoA + ATP = ADP + CoA + H(+). Its pathway is cofactor biosynthesis; coenzyme A biosynthesis; CoA from (R)-pantothenate: step 5/5. Its function is as follows. Catalyzes the phosphorylation of the 3'-hydroxyl group of dephosphocoenzyme A to form coenzyme A. The polypeptide is Dephospho-CoA kinase (Neisseria meningitidis serogroup B (strain ATCC BAA-335 / MC58)).